A 156-amino-acid polypeptide reads, in one-letter code: Insulin (156 aa).

The first 31 residues, 1 to 31, serve as a signal peptide directing secretion; the sequence is MSKFLLQSHSANACLLTLLLTLASNLDISLA. 4 cysteine pairs are disulfide-bonded: Cys37–Cys114, Cys49–Cys119, Cys61–Cys128, and Cys112–Cys115. Residues 79–93 constitute a propeptide, c peptide beta; that stretch reads DTENVNDKLRGILLN. The propeptide at 96–102 is c peptide alpha; it reads EAFSYLT. A propeptide spans 141 to 156 (d peptide); the sequence is TGRSNSGHAQLEDNFS. A propeptide spans 144-156 (d peptide short form); that stretch reads SNSGHAQLEDNFS. Glu152 bears the 4-carboxyglutamate mark.

It belongs to the insulin family. In terms of assembly, heterodimer of a B chain or a B chain' and an A chain probably linked by three disulfide bonds. Expressed in the central region of the cerebral ganglia mostly within the F and C clusters.

The protein resides in the secreted. Involved in glucose metabolism. The sequence is that of Insulin (PIN) from Aplysia californica (California sea hare).